A 535-amino-acid polypeptide reads, in one-letter code: uncharacterized protein (535 aa).

6 helical membrane-spanning segments follow: residues 63–83, 90–110, 143–163, 168–188, 226–246, and 258–278; these read LTGIVVALLVVTFAFPVPSIY, VTFGVAPAYATLALAIGTYWI, VAAVHLILWDIGGALLATLYG, VFVTIILFSVTICGVLVATNC, SLGSGVPVTGIATTALYVLLV, and VLILSITTLIFGFLVMWILAW. The region spanning 279–330 is the HAMP domain; sequence LTAAPVRVVRAALKRVEQGDLRGDLVVFDGTELGELQRGFNAMVNGLRERER. One can recognise a Guanylate cyclase domain in the interval 362 to 486; the sequence is AVVFVDIVGS…KPVNQAARLC (125 aa).

This sequence belongs to the adenylyl cyclase class-3 family.

The protein localises to the cell membrane. This is an uncharacterized protein from Mycobacterium tuberculosis (strain ATCC 25618 / H37Rv).